Here is a 145-residue protein sequence, read N- to C-terminus: Holo-[acyl-carrier-protein] synthase (145 aa).

Asp-9 and Glu-63 together coordinate Mg(2+).

Belongs to the P-Pant transferase superfamily. AcpS family. The cofactor is Mg(2+).

The protein localises to the cytoplasm. It catalyses the reaction apo-[ACP] + CoA = holo-[ACP] + adenosine 3',5'-bisphosphate + H(+). Its function is as follows. Transfers the 4'-phosphopantetheine moiety from coenzyme A to a Ser of acyl-carrier-protein. The chain is Holo-[acyl-carrier-protein] synthase from Burkholderia vietnamiensis (strain G4 / LMG 22486) (Burkholderia cepacia (strain R1808)).